Here is a 492-residue protein sequence, read N- to C-terminus: PTS system N-acetylmuramic acid-specific EIIBC component (492 aa).

A PTS EIIB type-1 domain is found at 1 to 89 (MAKINQSVIA…NELLNSSTPT (89 aa)). Cys28 acts as the Phosphocysteine intermediate; for EIIB activity in catalysis. The PTS EIIC type-1 domain occupies 123 to 487 (TKFATIFTPL…KKIEVLKADV (365 aa)). The next 10 membrane-spanning stretches (helical) occupy residues 125-145 (FATI…LLGF), 167-187 (IIGY…ILIG), 193-213 (AFGG…LSYN), 227-247 (FFGY…AAIL), 265-285 (MILT…IFIM), 311-331 (ILAG…FVPV), 344-364 (LFPI…ALYV), 378-398 (GAII…VTLP), 403-423 (FITA…IAYL), and 450-470 (IFVG…SGFV).

The protein resides in the cell inner membrane. It carries out the reaction N-acetyl-beta-D-muramate(out) + N(pros)-phospho-L-histidyl-[protein] = N-acetyl-beta-D-muramate 6-phosphate(in) + L-histidyl-[protein]. In terms of biological role, the phosphoenolpyruvate-dependent sugar phosphotransferase system (sugar PTS), a major carbohydrate active transport system, catalyzes the phosphorylation of incoming sugar substrates concomitantly with their translocation across the cell membrane. This system is involved in N-acetylmuramic acid (MurNAc) transport, yielding cytoplasmic MurNAc-6-P. Is also able to take up anhydro-N-acetylmuramic acid (anhMurNAc), but cannot phosphorylate the carbon 6, probably because of the 1,6-anhydro ring. The chain is PTS system N-acetylmuramic acid-specific EIIBC component (murP) from Photorhabdus laumondii subsp. laumondii (strain DSM 15139 / CIP 105565 / TT01) (Photorhabdus luminescens subsp. laumondii).